The primary structure comprises 517 residues: GMP synthase [glutamine-hydrolyzing] (517 aa).

The Glutamine amidotransferase type-1 domain maps to 11-202 (KIIVLDFGSQ…AFDVCGAKDN (192 aa)). Residue cysteine 88 is the Nucleophile of the active site. Residues histidine 176 and glutamate 178 contribute to the active site. The region spanning 203–392 (WTMDDFIKLS…LGLPHDLVWR (190 aa)) is the GMPS ATP-PPase domain. 230 to 236 (SGGVDSS) is a binding site for ATP.

In terms of assembly, homodimer.

The catalysed reaction is XMP + L-glutamine + ATP + H2O = GMP + L-glutamate + AMP + diphosphate + 2 H(+). The protein operates within purine metabolism; GMP biosynthesis; GMP from XMP (L-Gln route): step 1/1. Catalyzes the synthesis of GMP from XMP. The protein is GMP synthase [glutamine-hydrolyzing] of Lactobacillus delbrueckii subsp. bulgaricus (strain ATCC 11842 / DSM 20081 / BCRC 10696 / JCM 1002 / NBRC 13953 / NCIMB 11778 / NCTC 12712 / WDCM 00102 / Lb 14).